Here is a 924-residue protein sequence, read N- to C-terminus: Isoleucine--tRNA ligase (924 aa).

A 'HIGH' region motif is present at residues 58 to 68 (PYANGQIHVGH). Glu561 contacts L-isoleucyl-5'-AMP. The short motif at 602-606 (KMSKS) is the 'KMSKS' region element. Lys605 provides a ligand contact to ATP. Residues Cys887, Cys890, Cys907, and Cys910 each contribute to the Zn(2+) site.

This sequence belongs to the class-I aminoacyl-tRNA synthetase family. IleS type 1 subfamily. Monomer. Zn(2+) is required as a cofactor.

It localises to the cytoplasm. The catalysed reaction is tRNA(Ile) + L-isoleucine + ATP = L-isoleucyl-tRNA(Ile) + AMP + diphosphate. Catalyzes the attachment of isoleucine to tRNA(Ile). As IleRS can inadvertently accommodate and process structurally similar amino acids such as valine, to avoid such errors it has two additional distinct tRNA(Ile)-dependent editing activities. One activity is designated as 'pretransfer' editing and involves the hydrolysis of activated Val-AMP. The other activity is designated 'posttransfer' editing and involves deacylation of mischarged Val-tRNA(Ile). The sequence is that of Isoleucine--tRNA ligase from Dichelobacter nodosus (strain VCS1703A).